Consider the following 512-residue polypeptide: MKLKPIEVAEILQKEIANINCLSEIKEVGQVISVGDGIAKIYGLANVKSGEVVEFKSGVKGLVLNLENDSVSAVIMGDDNQVQQGDNVKRTKEVLEVPVGKALLGRVVDALGNPIDGKGDIASKEYRHIAMKAPGIIERTSVSEPVQTGIKAIDSLIPIGRGQRELIIGDRQTGKTAIAVDTIINQKQAHSLTNESDKIYCIYVAIGQKRSSVAQIVKKLEDAGAMDYTIVVSATASEAASLQFIAPYSACSMGEYFRDNGMHALIIYDDLSKHAVAYRQISLLLRRPPGREAYPGDVFYLHSRLLERAAKMSEEKGNGSLTALPIIETQAGDVSAYIPTNVISITDGQIFLESELFYKGVRPAVNVGISVSRVGSAAQIKAMKQVAGSVKLELAQFRELESFSQFGSDLDPATKAQIDHGKRLVEILKQAQYRPLPVEEQIISLYVGTKKYLNDVPLQKVKEFEDKMLTEIRLNKKDILESIKNEQRITEETEQKLKAFLENFVKAYCVMP.

Residue 169–176 coordinates ATP; sequence GDRQTGKT.

It belongs to the ATPase alpha/beta chains family. F-type ATPases have 2 components, CF(1) - the catalytic core - and CF(0) - the membrane proton channel. CF(1) has five subunits: alpha(3), beta(3), gamma(1), delta(1), epsilon(1). CF(0) has three main subunits: a(1), b(2) and c(9-12). The alpha and beta chains form an alternating ring which encloses part of the gamma chain. CF(1) is attached to CF(0) by a central stalk formed by the gamma and epsilon chains, while a peripheral stalk is formed by the delta and b chains.

It localises to the cell inner membrane. The enzyme catalyses ATP + H2O + 4 H(+)(in) = ADP + phosphate + 5 H(+)(out). Functionally, produces ATP from ADP in the presence of a proton gradient across the membrane. The alpha chain is a regulatory subunit. This Rickettsia akari (strain Hartford) protein is ATP synthase subunit alpha.